Here is a 406-residue protein sequence, read N- to C-terminus: Peptidase T (406 aa).

H82 lines the Zn(2+) pocket. The active site involves D84. Zn(2+) is bound at residue D142. E176 (proton acceptor) is an active-site residue. Positions 177, 199, and 381 each coordinate Zn(2+).

Belongs to the peptidase M20B family. Zn(2+) serves as cofactor.

The protein resides in the cytoplasm. It carries out the reaction Release of the N-terminal residue from a tripeptide.. Cleaves the N-terminal amino acid of tripeptides. The protein is Peptidase T of Streptococcus agalactiae serotype Ia (strain ATCC 27591 / A909 / CDC SS700).